Consider the following 307-residue polypeptide: uncharacterized protein (307 aa).

The region spanning R54 to E307 is the EAL domain. The next 2 helical transmembrane spans lie at P158–L178 and A203–L223.

The protein localises to the cell membrane. This is an uncharacterized protein from Mycobacterium tuberculosis (strain CDC 1551 / Oshkosh).